We begin with the raw amino-acid sequence, 313 residues long: Cytochrome c oxidase assembly protein COX18, mitochondrial (313 aa).

A helical membrane pass occupies residues 209–229 (SLPLDAAPMLIPIILGTVSMI). At 230 to 272 (NVEYNGKTMQATAVGTSGITTATDTQSRTSQTVNSILTATRLS) the chain is on the mitochondrial matrix side. Residues 273–293 (TIFLIGVSTQASVLLSLYWIT) traverse the membrane as a helical segment. At 294 to 313 (SQVYSLIQNRILDLLWPYQR) the chain is on the mitochondrial intermembrane side.

It belongs to the OXA1/ALB3/YidC family.

It is found in the mitochondrion inner membrane. Its function is as follows. Required for the insertion of integral membrane proteins into the mitochondrial inner membrane. Essential for the activity and assembly of cytochrome c oxidase. The chain is Cytochrome c oxidase assembly protein COX18, mitochondrial (COX18) from Kluyveromyces lactis (strain ATCC 8585 / CBS 2359 / DSM 70799 / NBRC 1267 / NRRL Y-1140 / WM37) (Yeast).